Reading from the N-terminus, the 1204-residue chain is Bromodomain and PHD finger-containing protein 3 (1204 aa).

Disordered regions lie at residues 1–27 (MRKP…KCSP) and 76–127 (SNKE…TGSQ). Residues 89–99 (KSKKPSSKGKR) show a composition bias toward basic residues. The PHD-type 1 zinc-finger motif lies at 212–262 (DAFCCVCLDDECHNSNVILFCDICNLAVHQECYGVPYIPEGQWLCRCCLQS). Residues 266-299 (PVDCVLCPNKGGAFKQTSDGHWAHVVCAIWIPEV) form a C2HC pre-PHD-type zinc finger. Residues 323 to 387 (LTCYICKQKG…RKTAYCEAHS (65 aa)) form a PHD-type 2 zinc finger. The interval 393–464 (ARRKGDSPRS…KKEPEEAGRE (72 aa)) is disordered. Serine 399 and serine 402 each carry phosphoserine. Residues 417–429 (GEEEQEEAEEEGQ) show a composition bias toward acidic residues. Basic residues predominate over residues 442 to 454 (VSKKGKMSLKQKI). Residues lysine 445, lysine 447, and lysine 670 each carry the N6-acetyllysine modification. A Bromo domain is found at 588-692 (LELMPFTVLL…DLGGAILRHA (105 aa)). 2 positions are modified to phosphoserine: serine 712 and serine 739. The tract at residues 778 to 879 (RQKLAQPPPP…FLKSRKVEDE (102 aa)) is disordered. Residues 816 to 826 (QQEEPEEEGDR) show a composition bias toward acidic residues. 3 positions are modified to phosphoserine: serine 899, serine 961, and serine 964. The segment at 903-1015 (IDRLSLTNPD…ESGSDSECSL (113 aa)) is disordered. Over residues 979–990 (SCSDSEGERSPQ) the composition is skewed to basic and acidic residues. One can recognise a PWWP domain in the interval 1075-1158 (PLELVWAKCR…RDKVLPLGVE (84 aa)).

In terms of assembly, component of some HBO1 complexes composed of KAT7/HBO1, MEAF6, ING4 or ING5, and BRPF3. Component of the MOZ/MORF complex composed at least of ING5, KAT6A, KAT6B, MEAF6 and one of BRPF1, BRD1/BRPF2 and BRPF3. Interacts with KAT7/HBO1; the interaction is direct. As to expression, highly expressed in the adult testis and brain.

The protein localises to the nucleus. Scaffold subunit of various histone acetyltransferase (HAT) complexes, such as the MOZ/MORF and HBO1 complexes, which have a histone H3 acetyltransferase activity. Plays a role in DNA replication initiation by directing KAT7/HBO1 specificity towards histone H3 'Lys-14' acetylation (H3K14ac), thereby facilitating the activation of replication origins. Component of the MOZ/MORF complex which has a histone H3 acetyltransferase activity. The polypeptide is Bromodomain and PHD finger-containing protein 3 (Mus musculus (Mouse)).